A 432-amino-acid polypeptide reads, in one-letter code: Adenylosuccinate synthetase (432 aa).

GTP contacts are provided by residues G13–K19 and G41–T43. Residue D14 is the Proton acceptor of the active site. D14 and G41 together coordinate Mg(2+). IMP-binding positions include D14 to K17, N39 to H42, T130, R144, Q225, T240, and R304. The Proton donor role is filled by H42. Substrate is bound at residue A300–R306. Residues R306, K332–D334, and S415–G417 contribute to the GTP site.

This sequence belongs to the adenylosuccinate synthetase family. As to quaternary structure, homodimer. The cofactor is Mg(2+).

It is found in the cytoplasm. It catalyses the reaction IMP + L-aspartate + GTP = N(6)-(1,2-dicarboxyethyl)-AMP + GDP + phosphate + 2 H(+). Its pathway is purine metabolism; AMP biosynthesis via de novo pathway; AMP from IMP: step 1/2. Plays an important role in the de novo pathway of purine nucleotide biosynthesis. Catalyzes the first committed step in the biosynthesis of AMP from IMP. This chain is Adenylosuccinate synthetase, found in Pasteurella multocida (strain Pm70).